The primary structure comprises 533 residues: NAD(P)H-quinone oxidoreductase chain 4 (533 aa).

15 helical membrane passes run 5–25 (VPWL…VPLV), 36–56 (WYAL…YLTG), 70–90 (VSWL…LSMP), 91–111 (LILL…PVSF), 115–135 (LFYF…AVQD), 137–157 (LLFF…LAIW), 169–189 (FILY…AMGF), 210–230 (GFQL…LPIV), 244–264 (TAPV…YALL), 278–298 (FAPL…LTSF), 315–335 (MGFV…GAML), 336–356 (QMIS…ATYD), 377–397 (FALW…SGFV), 418–438 (VVIC…LLSM), and 465–485 (VYII…PKLM).

Belongs to the complex I subunit 4 family.

The protein resides in the cellular thylakoid membrane. The catalysed reaction is a plastoquinone + NADH + (n+1) H(+)(in) = a plastoquinol + NAD(+) + n H(+)(out). It carries out the reaction a plastoquinone + NADPH + (n+1) H(+)(in) = a plastoquinol + NADP(+) + n H(+)(out). Its function is as follows. NDH-1 shuttles electrons from NAD(P)H, via FMN and iron-sulfur (Fe-S) centers, to quinones in the respiratory chain. The immediate electron acceptor for the enzyme in this species is believed to be plastoquinone. Couples the redox reaction to proton translocation (for every two electrons transferred, four hydrogen ions are translocated across the cytoplasmic membrane), and thus conserves the redox energy in a proton gradient. This chain is NAD(P)H-quinone oxidoreductase chain 4, found in Synechococcus sp. (strain CC9605).